The chain runs to 1358 residues: Phosphoinositide 3-kinase regulatory subunit 4 (1358 aa).

Residue Gly2 is the site of N-myristoyl glycine attachment. Residues 26-324 (FEYDKSLGST…AFPEVFYTFL (299 aa)) enclose the Protein kinase domain. Residues 32–40 (LGSTRFFKV) and Lys53 contribute to the ATP site. Asp148 serves as the catalytic Proton acceptor. 4 HEAT repeats span residues 413–450 (ILLD…LVQE), 458–495 (IYPE…TALR), 572–610 (KAND…YVGW), and 612–648 (SSSI…LGLL). 4 positions are modified to phosphoserine: Ser808, Ser813, Ser853, and Ser865. Residues 875–899 (LPKTSDHEVVPTGKSPRSESSAGVC) are disordered. WD repeat units lie at residues 991–1030 (EHKS…GKTT), 1040–1079 (RIGG…LPKS), 1093–1134 (KEDG…NAWT), 1139–1178 (LKSG…PISS), 1182–1223 (PSRA…RRLT), and 1237–1278 (PSPH…RSYV). Positions 1307-1326 (KQKVGPSDDTPRRGPESLPV) are disordered. Basic and acidic residues predominate over residues 1315–1326 (DTPRRGPESLPV). Thr1316 carries the post-translational modification Phosphothreonine. One copy of the WD 7 repeat lies at 1327 to 1358 (GHHDIITDIATFQTTQGFIVTASRDGIVKVWK).

Belongs to the protein kinase superfamily. Ser/Thr protein kinase family. Component of the PI3K (PI3KC3/PI3K-III/class III phosphatidylinositol 3-kinase) complex the core of which is composed of the catalytic subunit PIK3C3, the regulatory subunit PIK3R4 and BECN1 associating with additional regulatory/auxiliary subunits to form alternative complex forms. Alternative complex forms containing a fourth regulatory subunit in a mutually exclusive manner are PI3K complex I (PI3KC3-C1) containing ATG14, and PI3K complex II (PI3KC3-C2) containing UVRAG. PI3KC3-C1 displays a V-shaped architecture with PIK3R4 serving as a bridge between PIK3C3 and the ATG14:BECN1 subcomplex. Both, PI3KC3-C1 and PI3KC3-C2, can associate with further regulatory subunits, such as RUBCN, SH3GLB1/Bif-1, AMBRA1 and NRBF2. PI3KC3-C1 probably associates with PIK3CB. Interacts with RAB7A in the presence of PIK3C3/VPS34. Interacts with NRBF2. Interacts with ARMC3. It depends on Mn(2+) as a cofactor. Myristoylated. In terms of processing, probably autophosphorylated.

It is found in the late endosome. It localises to the cytoplasmic vesicle. The protein localises to the autophagosome. Its subcellular location is the membrane. The enzyme catalyses L-seryl-[protein] + ATP = O-phospho-L-seryl-[protein] + ADP + H(+). The catalysed reaction is L-threonyl-[protein] + ATP = O-phospho-L-threonyl-[protein] + ADP + H(+). In terms of biological role, regulatory subunit of the PI3K complex that mediates formation of phosphatidylinositol 3-phosphate; different complex forms are believed to play a role in multiple membrane trafficking pathways: PI3KC3-C1 is involved in initiation of autophagosomes and PI3KC3-C2 in maturation of autophagosomes and endocytosis. Involved in regulation of degradative endocytic trafficking and cytokinesis, probably in the context of PI3KC3-C2. This Rattus norvegicus (Rat) protein is Phosphoinositide 3-kinase regulatory subunit 4 (Pik3r4).